The primary structure comprises 135 residues: Large ribosomal subunit protein bL19 (135 aa).

Belongs to the bacterial ribosomal protein bL19 family.

Functionally, this protein is located at the 30S-50S ribosomal subunit interface and may play a role in the structure and function of the aminoacyl-tRNA binding site. This is Large ribosomal subunit protein bL19 from Protochlamydia amoebophila (strain UWE25).